The chain runs to 287 residues: Fructose-1,6-bisphosphatase class 1 (287 aa).

4 residues coordinate Mg(2+): glutamate 67, aspartate 86, leucine 88, and aspartate 89. Residues 89-92, tyrosine 195, and lysine 226 contribute to the substrate site; that span reads DGSS. Glutamate 232 contacts Mg(2+).

The protein belongs to the FBPase class 1 family. As to quaternary structure, homotetramer. It depends on Mg(2+) as a cofactor.

The protein localises to the cytoplasm. The enzyme catalyses beta-D-fructose 1,6-bisphosphate + H2O = beta-D-fructose 6-phosphate + phosphate. It participates in carbohydrate biosynthesis; gluconeogenesis. The protein is Fructose-1,6-bisphosphatase class 1 of Campylobacter concisus (strain 13826).